A 379-amino-acid polypeptide reads, in one-letter code: ATPase ASNA1 homolog (379 aa).

The disordered stretch occupies residues Met-1–Tyr-20. Residues Asn-7 to Asp-18 are compositionally biased toward low complexity. Lys-46 to Thr-53 is an ATP binding site. Asp-75 is a catalytic residue. ATP-binding residues include Glu-246 and Asn-273.

It belongs to the arsA ATPase family. In terms of assembly, homodimer.

The protein resides in the cytoplasm. It is found in the endoplasmic reticulum. Functionally, ATPase required for the post-translational delivery of tail-anchored (TA) proteins to the endoplasmic reticulum. Recognizes and selectively binds the transmembrane domain of TA proteins in the cytosol. This complex then targets to the endoplasmic reticulum by membrane-bound receptors, where the tail-anchored protein is released for insertion. This process is regulated by ATP binding and hydrolysis. ATP binding drives the homodimer towards the closed dimer state, facilitating recognition of newly synthesized TA membrane proteins. ATP hydrolysis is required for insertion. Subsequently, the homodimer reverts towards the open dimer state, lowering its affinity for the membrane-bound receptor, and returning it to the cytosol to initiate a new round of targeting. This chain is ATPase ASNA1 homolog, found in Plasmodium falciparum (isolate 3D7).